Reading from the N-terminus, the 393-residue chain is 1-deoxy-D-xylulose 5-phosphate reductoisomerase (393 aa).

NADPH is bound by residues T16, G17, S18, I19, A42, R43, N44, and N127. Position 128 (K128) interacts with 1-deoxy-D-xylulose 5-phosphate. Residue E129 participates in NADPH binding. Residue D153 participates in Mn(2+) binding. 1-deoxy-D-xylulose 5-phosphate-binding residues include S154, E155, S179, and H202. Mn(2+) is bound at residue E155. G208 provides a ligand contact to NADPH. 4 residues coordinate 1-deoxy-D-xylulose 5-phosphate: S215, N220, K221, and E224. Residue E224 participates in Mn(2+) binding.

Belongs to the DXR family. Requires Mg(2+) as cofactor. Mn(2+) serves as cofactor.

The catalysed reaction is 2-C-methyl-D-erythritol 4-phosphate + NADP(+) = 1-deoxy-D-xylulose 5-phosphate + NADPH + H(+). Its pathway is isoprenoid biosynthesis; isopentenyl diphosphate biosynthesis via DXP pathway; isopentenyl diphosphate from 1-deoxy-D-xylulose 5-phosphate: step 1/6. Functionally, catalyzes the NADPH-dependent rearrangement and reduction of 1-deoxy-D-xylulose-5-phosphate (DXP) to 2-C-methyl-D-erythritol 4-phosphate (MEP). The polypeptide is 1-deoxy-D-xylulose 5-phosphate reductoisomerase (Jannaschia sp. (strain CCS1)).